A 170-amino-acid chain; its full sequence is Probable Brix domain-containing ribosomal biogenesis protein (170 aa).

One can recognise a Brix domain in the interval 6-170 (TRIVITSSRD…IKFLKMILEA (165 aa)).

Functionally, probably involved in the biogenesis of the ribosome. This chain is Probable Brix domain-containing ribosomal biogenesis protein, found in Saccharolobus solfataricus (strain ATCC 35092 / DSM 1617 / JCM 11322 / P2) (Sulfolobus solfataricus).